The primary structure comprises 262 residues: Small ribosomal subunit protein uS2 (262 aa).

The segment at 240–262 (NLDEKEESQEAESTEENTTVESN) is disordered. Positions 243–254 (EKEESQEAESTE) are enriched in acidic residues.

This sequence belongs to the universal ribosomal protein uS2 family.

The protein is Small ribosomal subunit protein uS2 of Staphylococcus haemolyticus (strain JCSC1435).